The chain runs to 299 residues: YjeF N-terminal domain-containing protein 3 (299 aa).

The region spanning 74–287 (AAALERELLE…DVRRKFALRL (214 aa)) is the YjeF N-terminal domain.

As to quaternary structure, interacts with APOA1. Binds to HDL. In terms of tissue distribution, expressed in theca cells in ovary and in Leydig cells in testis (at protein level). Also expressed in brain and mammary gland.

In terms of biological role, may accelerate cholesterol efflux from endothelial cells to high-density lipoprotein (HDL) and thereby regulates angiogenesis. May orchestrate hematopoietic stem and progenitor cell emergence from the hemogenic endothelium, a type of specialized endothelium manifesting hematopoietic potential. YJEFN3-mediated cholesterol efflux activates endothelial SREBF2, the master transcription factor for cholesterol biosynthesis, which in turn transactivates NOTCH and promotes hematopoietic stem and progenitor cell emergence. May play a role in spermiogenesis and oogenesis. This is YjeF N-terminal domain-containing protein 3 (YJEFN3) from Homo sapiens (Human).